The chain runs to 386 residues: 2-isopropylmalate synthase (386 aa).

A Pyruvate carboxyltransferase domain is found at 12-265; it reads VRIFDTTLRD…DVGVRTYLLY (254 aa). A divalent metal cation-binding residues include Asp-21, His-203, His-205, and Asn-239.

It belongs to the alpha-IPM synthase/homocitrate synthase family. Homodimer. A divalent metal cation is required as a cofactor.

It catalyses the reaction 3-methyl-2-oxobutanoate + acetyl-CoA + H2O = (2S)-2-isopropylmalate + CoA + H(+). It functions in the pathway amino-acid biosynthesis; L-leucine biosynthesis; L-leucine from 3-methyl-2-oxobutanoate: step 1/4. Is not inhibited by leucine. In terms of biological role, catalyzes the condensation of the acetyl group of acetyl-CoA with 3-methyl-2-oxobutanoate (2-oxoisovalerate) to form 3-carboxy-3-hydroxy-4-methylpentanoate (2-isopropylmalate). Carries out the first step of the leucine biosynthesis pathway. Also displays a low citramalate synthase activity, using pyruvate as substrate, but is unable to use 2-oxoglutarate. This chain is 2-isopropylmalate synthase, found in Sulfolobus acidocaldarius (strain ATCC 33909 / DSM 639 / JCM 8929 / NBRC 15157 / NCIMB 11770).